The primary structure comprises 257 residues: tRNA pseudouridine synthase A (257 aa).

Catalysis depends on D57, which acts as the Nucleophile. Y115 contributes to the substrate binding site.

This sequence belongs to the tRNA pseudouridine synthase TruA family. As to quaternary structure, homodimer.

The catalysed reaction is uridine(38/39/40) in tRNA = pseudouridine(38/39/40) in tRNA. In terms of biological role, formation of pseudouridine at positions 38, 39 and 40 in the anticodon stem and loop of transfer RNAs. This Lawsonia intracellularis (strain PHE/MN1-00) protein is tRNA pseudouridine synthase A.